Reading from the N-terminus, the 1179-residue chain is Dynein axonemal assembly factor 9 (1179 aa).

Interacts with ARL3.

Its function is as follows. May act as an effector for ARL3. In Mus musculus (Mouse), this protein is Dynein axonemal assembly factor 9.